A 1195-amino-acid chain; its full sequence is DNA-directed RNA polymerase subunit Rpo2 (1195 aa).

A compositionally biased stretch (basic and acidic residues) spans 894–909; the sequence is LEEGEERLGPQRRRES. Residues 894–914 form a disordered region; sequence LEEGEERLGPQRRRESSVTMR. The Zn(2+) site is built by Cys-1135, Cys-1140, Cys-1155, and Cys-1158.

The protein belongs to the RNA polymerase beta chain family. In terms of assembly, part of the RNA polymerase complex. Zn(2+) is required as a cofactor.

The protein localises to the cytoplasm. It carries out the reaction RNA(n) + a ribonucleoside 5'-triphosphate = RNA(n+1) + diphosphate. DNA-dependent RNA polymerase (RNAP) catalyzes the transcription of DNA into RNA using the four ribonucleoside triphosphates as substrates. This subunit is involved in DNA promoter recognition. This is DNA-directed RNA polymerase subunit Rpo2 from Thermoplasma acidophilum (strain ATCC 25905 / DSM 1728 / JCM 9062 / NBRC 15155 / AMRC-C165).